The primary structure comprises 163 residues: Putative pre-16S rRNA nuclease (163 aa).

It belongs to the YqgF nuclease family.

It is found in the cytoplasm. Its function is as follows. Could be a nuclease involved in processing of the 5'-end of pre-16S rRNA. This Zymomonas mobilis subsp. mobilis (strain ATCC 31821 / ZM4 / CP4) protein is Putative pre-16S rRNA nuclease.